The primary structure comprises 273 residues: Kit ligand (273 aa).

The first 25 residues, 1–25 (MKKTQTWIITCIYLQLLLFNPLVKT), serve as a signal peptide directing secretion. Glutamine 26 carries the post-translational modification Pyrrolidone carboxylic acid. The Extracellular portion of the chain corresponds to 26–214 (QEICRNPVTD…AKSPEDPGLQ (189 aa)). Cystine bridges form between cysteine 29–cysteine 114 and cysteine 68–cysteine 163. An N-linked (GlcNAc...) asparagine; partial glycan is attached at asparagine 90. Asparagine 145 is a glycosylation site (N-linked (GlcNAc...) asparagine). Serine 167 carries O-linked (GalNAc...) serine glycosylation. Threonine 168 and threonine 180 each carry an O-linked (GalNAc...) threonine glycan. The interval 190–211 (ASSLRNDSSSSNRKAAKSPEDP) is disordered. Over residues 191–202 (SSLRNDSSSSNR) the composition is skewed to low complexity. A glycan (N-linked (GlcNAc...) asparagine) is linked at asparagine 195. A helical membrane pass occupies residues 215–237 (WTAMALPALISLVIGFAFGALYW). Residues 238 to 273 (KKKQSSLTRAVENIQINEEDNEISMLQQKEREFQEV) lie on the Cytoplasmic side of the membrane.

Belongs to the SCF family. In terms of assembly, homodimer, non-covalently linked. Heterotetramer with KIT, binding two KIT molecules; thereby mediates KIT dimerization and subsequent activation by autophosphorylation. Post-translationally, a soluble form is produced by proteolytic processing of isoform 1 in the extracellular domain. The identity of N- and O-linked saccharides is not reported in PubMed:1708771. The O-linked polysaccharides are probably the mucin type linked to GalNAc.

It localises to the cell membrane. Its subcellular location is the cytoplasm. The protein resides in the cytoskeleton. The protein localises to the cell projection. It is found in the lamellipodium. It localises to the filopodium. Its subcellular location is the secreted. Its function is as follows. Ligand for the receptor-type protein-tyrosine kinase KIT. Plays an essential role in the regulation of cell survival and proliferation, hematopoiesis, stem cell maintenance, gametogenesis, mast cell development, migration and function, and in melanogenesis. KITLG/SCF binding can activate several signaling pathways. Promotes phosphorylation of PIK3R1, the regulatory subunit of phosphatidylinositol 3-kinase, and subsequent activation of the kinase AKT1. KITLG/SCF and KIT also transmit signals via GRB2 and activation of RAS, RAF1 and the MAP kinases MAPK1/ERK2 and/or MAPK3/ERK1. KITLG/SCF and KIT promote activation of STAT family members STAT1, STAT3 and STAT5. KITLG/SCF and KIT promote activation of PLCG1, leading to the production of the cellular signaling molecules diacylglycerol and inositol 1,4,5-trisphosphate. KITLG/SCF acts synergistically with other cytokines, probably interleukins. The chain is Kit ligand (Kitlg) from Rattus norvegicus (Rat).